A 345-amino-acid polypeptide reads, in one-letter code: Acetylserotonin O-methyltransferase (345 aa).

Residues tyrosine 147, tryptophan 164, aspartate 210, 235-237, and arginine 252 contribute to the S-adenosyl-L-methionine site; that span reads GDF. The active-site Proton donor/acceptor is the histidine 255. The substrate site is built by aspartate 256, asparagine 302, and glutamine 306.

Belongs to the class I-like SAM-binding methyltransferase superfamily. Cation-independent O-methyltransferase family. In terms of assembly, homodimer. Highly expressed in pineal gland. In the retina, 10- to 100-fold lower expression compared to pineal gland, if any.

It catalyses the reaction N-acetylserotonin + S-adenosyl-L-methionine = melatonin + S-adenosyl-L-homocysteine + H(+). It functions in the pathway aromatic compound metabolism; melatonin biosynthesis; melatonin from serotonin: step 1/2. In terms of biological role, catalyzes the transfer of a methyl group onto N-acetylserotonin, producing melatonin (N-acetyl-5-methoxytryptamine). The protein is Acetylserotonin O-methyltransferase (ASMT) of Macaca mulatta (Rhesus macaque).